The chain runs to 632 residues: Threonine--tRNA ligase (632 aa).

One can recognise a TGS domain in the interval 1–61; that stretch reads MPIITLPDGT…KTDANLAIIT (61 aa). The interval 242 to 533 is catalytic; it reads DHRKIGKIQD…LIEHYEGAYP (292 aa). Positions 333, 384, and 510 each coordinate Zn(2+).

It belongs to the class-II aminoacyl-tRNA synthetase family. In terms of assembly, homodimer. The cofactor is Zn(2+).

It localises to the cytoplasm. The catalysed reaction is tRNA(Thr) + L-threonine + ATP = L-threonyl-tRNA(Thr) + AMP + diphosphate + H(+). In terms of biological role, catalyzes the attachment of threonine to tRNA(Thr) in a two-step reaction: L-threonine is first activated by ATP to form Thr-AMP and then transferred to the acceptor end of tRNA(Thr). Also edits incorrectly charged L-seryl-tRNA(Thr). This is Threonine--tRNA ligase from Ruthia magnifica subsp. Calyptogena magnifica.